The sequence spans 160 residues: MGKIALQLKATLENVTNLRPVGEDFRWYLKMKCGNCGEISEKWQYIRLMDSVALKGGRGSASMVQKCKLCARENSIEILSSTIKSYNAEDNEKFKTIVEFECRGLEPVDFQPQAGFAAEGVESGTVFSDINLQEKDWTDYDEKTQESVGIFEVTHQFVKC.

Zn(2+)-binding residues include C33, C36, C67, and C70. Phosphoserine is present on S75.

This sequence belongs to the UPF0587 family. In terms of assembly, monomer.

This chain is CXXC motif containing zinc binding protein, found in Rattus norvegicus (Rat).